The following is a 325-amino-acid chain: GTP 3',8-cyclase (325 aa).

One can recognise a Radical SAM core domain in the interval 10 to 229; the sequence is GYGRRINYLR…PSLEKIKSED (220 aa). Arginine 19 lines the GTP pocket. The [4Fe-4S] cluster site is built by cysteine 26 and cysteine 30. Position 32 (tyrosine 32) interacts with S-adenosyl-L-methionine. [4Fe-4S] cluster is bound at residue cysteine 33. Residue arginine 69 participates in GTP binding. An S-adenosyl-L-methionine-binding site is contributed by glycine 73. Threonine 100 lines the GTP pocket. Residue serine 124 coordinates S-adenosyl-L-methionine. Lysine 161 provides a ligand contact to GTP. Position 195 (methionine 195) interacts with S-adenosyl-L-methionine. [4Fe-4S] cluster is bound by residues cysteine 257 and cysteine 260. Position 262–264 (262–264) interacts with GTP; it reads RLR. Cysteine 274 contributes to the [4Fe-4S] cluster binding site.

This sequence belongs to the radical SAM superfamily. MoaA family. Monomer and homodimer. The cofactor is [4Fe-4S] cluster.

It carries out the reaction GTP + AH2 + S-adenosyl-L-methionine = (8S)-3',8-cyclo-7,8-dihydroguanosine 5'-triphosphate + 5'-deoxyadenosine + L-methionine + A + H(+). The protein operates within cofactor biosynthesis; molybdopterin biosynthesis. Its function is as follows. Catalyzes the cyclization of GTP to (8S)-3',8-cyclo-7,8-dihydroguanosine 5'-triphosphate. This Peptoclostridium acidaminophilum (Eubacterium acidaminophilum) protein is GTP 3',8-cyclase.